A 263-amino-acid chain; its full sequence is Methylesterase 18 (263 aa).

S80 functions as the Acyl-ester intermediate in the catalytic mechanism. Active-site charge relay system residues include D212 and H240.

The protein belongs to the AB hydrolase superfamily. Methylesterase family.

It carries out the reaction methyl (indol-3-yl)acetate + H2O = (indol-3-yl)acetate + methanol + H(+). It functions in the pathway plant hormone biosynthesis. Methylesterase shown to have methyl indole-3-acetic acid (MeIAA) esterase activity in vitro. This Arabidopsis thaliana (Mouse-ear cress) protein is Methylesterase 18.